We begin with the raw amino-acid sequence, 601 residues long: Elongation factor 4 (601 aa).

The tr-type G domain occupies 7-189 (SLIRNFSIIA…ALVTRLPPPV (183 aa)). Residues 19-24 (DHGKST) and 136-139 (NKVD) each bind GTP.

It belongs to the TRAFAC class translation factor GTPase superfamily. Classic translation factor GTPase family. LepA subfamily.

The protein localises to the cell inner membrane. It carries out the reaction GTP + H2O = GDP + phosphate + H(+). In terms of biological role, required for accurate and efficient protein synthesis under certain stress conditions. May act as a fidelity factor of the translation reaction, by catalyzing a one-codon backward translocation of tRNAs on improperly translocated ribosomes. Back-translocation proceeds from a post-translocation (POST) complex to a pre-translocation (PRE) complex, thus giving elongation factor G a second chance to translocate the tRNAs correctly. Binds to ribosomes in a GTP-dependent manner. This is Elongation factor 4 from Gluconacetobacter diazotrophicus (strain ATCC 49037 / DSM 5601 / CCUG 37298 / CIP 103539 / LMG 7603 / PAl5).